The primary structure comprises 180 residues: ATP synthase subunit b 2 (180 aa).

The chain crosses the membrane as a helical span at residues 33-53 (IFWLLVTLVAIYFLLTRVALP).

This sequence belongs to the ATPase B chain family. In terms of assembly, F-type ATPases have 2 components, F(1) - the catalytic core - and F(0) - the membrane proton channel. F(1) has five subunits: alpha(3), beta(3), gamma(1), delta(1), epsilon(1). F(0) has three main subunits: a(1), b(2) and c(10-14). The alpha and beta chains form an alternating ring which encloses part of the gamma chain. F(1) is attached to F(0) by a central stalk formed by the gamma and epsilon chains, while a peripheral stalk is formed by the delta and b chains.

The protein resides in the cell inner membrane. F(1)F(0) ATP synthase produces ATP from ADP in the presence of a proton or sodium gradient. F-type ATPases consist of two structural domains, F(1) containing the extramembraneous catalytic core and F(0) containing the membrane proton channel, linked together by a central stalk and a peripheral stalk. During catalysis, ATP synthesis in the catalytic domain of F(1) is coupled via a rotary mechanism of the central stalk subunits to proton translocation. In terms of biological role, component of the F(0) channel, it forms part of the peripheral stalk, linking F(1) to F(0). The b'-subunit is a diverged and duplicated form of b found in plants and photosynthetic bacteria. The protein is ATP synthase subunit b 2 (atpF2) of Cereibacter sphaeroides (strain ATCC 17029 / ATH 2.4.9) (Rhodobacter sphaeroides).